The sequence spans 191 residues: Putative acetyltransferase DDB_G0280825 (191 aa).

This sequence belongs to the transferase hexapeptide repeat family.

In Dictyostelium discoideum (Social amoeba), this protein is Putative acetyltransferase DDB_G0280825.